We begin with the raw amino-acid sequence, 95 residues long: Protein NCBP2AS2 homolog (95 aa).

This is Protein NCBP2AS2 homolog from Ixodes scapularis (Black-legged tick).